A 149-amino-acid polypeptide reads, in one-letter code: Transcriptional repressor NrdR (149 aa).

The segment at 3 to 34 (CPFCQSDDTKVLDTRLIDDGSQVRRRRECVSC) is a zinc-finger region. The ATP-cone domain maps to 49–139 (PHLIKSDDSR…VYRQFQDIEA (91 aa)).

Belongs to the NrdR family. It depends on Zn(2+) as a cofactor.

Functionally, negatively regulates transcription of bacterial ribonucleotide reductase nrd genes and operons by binding to NrdR-boxes. The polypeptide is Transcriptional repressor NrdR (Ruthia magnifica subsp. Calyptogena magnifica).